Here is a 538-residue protein sequence, read N- to C-terminus: CTP synthase (538 aa).

The interval 1 to 267 (MDRAKFIFVT…LTPIARRFNL (267 aa)) is amidoligase domain. Position 15 (Ser-15) interacts with CTP. Ser-15 contacts UTP. ATP-binding positions include 16 to 21 (SLGKGI) and Asp-73. Residues Asp-73 and Glu-141 each coordinate Mg(2+). Residues 148–150 (DME), 188–193 (KTKPTQ), and Lys-224 contribute to the CTP site. UTP is bound by residues 188 to 193 (KTKPTQ) and Lys-224. The Glutamine amidotransferase type-1 domain occupies 292–538 (KIGFVGKYLS…DFIKSALSKS (247 aa)). Position 351 (Gly-351) interacts with L-glutamine. Cys-378 serves as the catalytic Nucleophile; for glutamine hydrolysis. Residues 379 to 382 (LGMQ), Glu-402, and Arg-469 each bind L-glutamine. Active-site residues include His-513 and Glu-515.

Belongs to the CTP synthase family. Homotetramer.

It carries out the reaction UTP + L-glutamine + ATP + H2O = CTP + L-glutamate + ADP + phosphate + 2 H(+). The catalysed reaction is L-glutamine + H2O = L-glutamate + NH4(+). It catalyses the reaction UTP + NH4(+) + ATP = CTP + ADP + phosphate + 2 H(+). It participates in pyrimidine metabolism; CTP biosynthesis via de novo pathway; CTP from UDP: step 2/2. Its activity is regulated as follows. Allosterically activated by GTP, when glutamine is the substrate; GTP has no effect on the reaction when ammonia is the substrate. The allosteric effector GTP functions by stabilizing the protein conformation that binds the tetrahedral intermediate(s) formed during glutamine hydrolysis. Inhibited by the product CTP, via allosteric rather than competitive inhibition. In terms of biological role, catalyzes the ATP-dependent amination of UTP to CTP with either L-glutamine or ammonia as the source of nitrogen. Regulates intracellular CTP levels through interactions with the four ribonucleotide triphosphates. This Helicobacter pylori (strain HPAG1) protein is CTP synthase.